The primary structure comprises 549 residues: Probable protein kinase UbiB (549 aa).

The Protein kinase domain maps to 123-501; that stretch reads DFNETPLASA…QQQAHKSNYL (379 aa). ATP is bound by residues 129–137 and K152; that span reads LASASISQV. The active-site Proton acceptor is D287. 2 helical membrane passes run 498 to 518 and 520 to 540; these read SNYL…LFNQ and ATLW…IIGW.

Belongs to the ABC1 family. UbiB subfamily.

The protein resides in the cell inner membrane. The protein operates within cofactor biosynthesis; ubiquinone biosynthesis [regulation]. Is probably a protein kinase regulator of UbiI activity which is involved in aerobic coenzyme Q (ubiquinone) biosynthesis. This chain is Probable protein kinase UbiB, found in Shewanella sp. (strain MR-7).